A 1295-amino-acid polypeptide reads, in one-letter code: MLVLRGAPALSEFRTKKLMQSIEALNLPVHALFAEFVHFAQVSAQLEANDQQVLDKLLTYGPKIQEKQHKGLLLLVIPRAGTISPWSSKATDIAHNCGLNNVERLERGCAFYIDADPLNDTQLIQLKNVLHDRMTQSVVSDLQDASILFKHEAPKPLTSIDVLGGGREELVSANVRLGLALAEDEVDYLVSSFEKLGRNPNDIELYMFAQANSEHCRHKIFNADWTIDGQTQPKSLFKMIKNTYEKCPDYVHSAYADNAAVMEGSFAGRFFPQADNNQYRYHHEDIDILMKVETHNHPTAIAPFSGAATGSGGEIRDEGATGRGSKPKAGLVGFSVSNLRIPGFEQPWENDYGKPERIVTAFDIMLNGPLGGAAFNNEFGRPNILGYFRTYEQKVTSFNGEEVRGYHKPIMLAGGLGNIRKQHTQKGEITVGAKLIALGGPAMNIGLGGGAASSMASGESNEDLDFASVQRDNPEMERRCQEVIDKCWQLGENNPIQFIHDVGAGGLSNAFPELVNDGGRGAVFSLRNVPNDEPGMTPLEVWCNESQERYVMSVAPENLATFTDICARERAPFAVVGEATQARHLTLDDSHFNNKPIDMPLDVLLGKAPKMHRDVQSKALTGNAFDVSNIDLDEAALRLLHLPAVAEKTFLITIGDRSVTGLVNRDQMVGPWQIPVADVAVTAAAFDTYQGEAMSLGERTPAALLNYGASARLAVGEALTNIAAADIGDLKRIKLSANWMAAAGHPGEDAGLYEAVKAVGEELCPALGLTIPVGKDSMSMKTQWQDAQGDKAVTSPMSLVITAFGAVKDVRKTLTPELTTKGDTCLMLIDLGAGQNRMGASCLAQVYQQLGDKTPDVDSPELLKGFFLAIQQLVNEKALHAYHDRSDGGLFTTLVEMAFAGNTGLDIKLDALTGDNASALFNEELGAVIQFDADKLNQVDAILAANGLSGVSHVIGTLSDDDQIRFSREGEPVLQNSRGVYRNAWAQTTHHMQRLRDNPECAEQELASKNDLNNPGLHAALSFDVTEDVAAPYIAKGIAPKMAILREQGVNSHVEMAAAFDRAGFASVDVHMSDILAGRVSLSEFQGLVACGGFSYGDVLGAGEGWAKSILFNAMARDEFSAFFERNETFSLGVCNGCQMLSNLKSLIPGAEHWPHFVTNQSERFEARVAMLEVKDSPSIFFKGMQGSKMPIAVSHGEGRAEFAQTTGLEAALDSNTIALQYVDNYGKVTEQYPANPNGSPAGISGLTSKDGRATIMMPHPERVFRTVANSWHPDDWQEDSPWMRMFRNARVYLG.

Residues 302–327 are disordered; the sequence is APFSGAATGSGGEIRDEGATGRGSKP. ATP contacts are provided by residues 306-317 and alanine 677; that span reads GAATGSGGEIRD. 4 residues coordinate Mg(2+): aspartate 678, glutamate 717, asparagine 721, and aspartate 884. Serine 886 is a binding site for ATP. Residues 1042-1295 enclose the Glutamine amidotransferase type-1 domain; the sequence is MAILREQGVN…MFRNARVYLG (254 aa). Catalysis depends on cysteine 1135, which acts as the Nucleophile. Residues histidine 1260 and glutamate 1262 contribute to the active site.

In the N-terminal section; belongs to the FGAMS family. Monomer.

Its subcellular location is the cytoplasm. It catalyses the reaction N(2)-formyl-N(1)-(5-phospho-beta-D-ribosyl)glycinamide + L-glutamine + ATP + H2O = 2-formamido-N(1)-(5-O-phospho-beta-D-ribosyl)acetamidine + L-glutamate + ADP + phosphate + H(+). The protein operates within purine metabolism; IMP biosynthesis via de novo pathway; 5-amino-1-(5-phospho-D-ribosyl)imidazole from N(2)-formyl-N(1)-(5-phospho-D-ribosyl)glycinamide: step 1/2. Its function is as follows. Phosphoribosylformylglycinamidine synthase involved in the purines biosynthetic pathway. Catalyzes the ATP-dependent conversion of formylglycinamide ribonucleotide (FGAR) and glutamine to yield formylglycinamidine ribonucleotide (FGAM) and glutamate. This Pseudoalteromonas atlantica (strain T6c / ATCC BAA-1087) protein is Phosphoribosylformylglycinamidine synthase.